A 1066-amino-acid chain; its full sequence is FHIP family protein GI14169 (1066 aa).

Over residues methionine 1–glutamine 11 the composition is skewed to polar residues. The segment at methionine 1–proline 35 is disordered. The segment covering serine 12 to threonine 30 has biased composition (low complexity). Position 500 is a phosphoserine (serine 500). The interval glycine 651 to aspartate 682 is disordered. A compositionally biased stretch (low complexity) spans threonine 655 to serine 678. Position 820 is a phosphoserine (serine 820). Disordered stretches follow at residues proline 821–alanine 913 and serine 935–phenylalanine 1007. Positions leucine 822–glutamine 855 are enriched in low complexity. Positions arginine 856–serine 874 are enriched in polar residues. Residues serine 890–alanine 913 are compositionally biased toward low complexity. Polar residues predominate over residues glutamine 947–valine 971. Residues glycine 972–glycine 997 show a composition bias toward low complexity.

This sequence belongs to the FHIP family.

The polypeptide is FHIP family protein GI14169 (Drosophila mojavensis (Fruit fly)).